The following is a 388-amino-acid chain: 1D-myo-inositol 2-acetamido-2-deoxy-alpha-D-glucopyranoside deacetylase (388 aa).

Zn(2+) contacts are provided by His6, Asp9, and His144. The disordered stretch occupies residues Leu369–Arg388.

It belongs to the MshB deacetylase family. Zn(2+) serves as cofactor.

It carries out the reaction 1D-myo-inositol 2-acetamido-2-deoxy-alpha-D-glucopyranoside + H2O = 1D-myo-inositol 2-amino-2-deoxy-alpha-D-glucopyranoside + acetate. Functionally, catalyzes the deacetylation of 1D-myo-inositol 2-acetamido-2-deoxy-alpha-D-glucopyranoside (GlcNAc-Ins) in the mycothiol biosynthesis pathway. The chain is 1D-myo-inositol 2-acetamido-2-deoxy-alpha-D-glucopyranoside deacetylase from Corynebacterium kroppenstedtii (strain DSM 44385 / JCM 11950 / CIP 105744 / CCUG 35717).